Consider the following 215-residue polypeptide: Cytochrome c biogenesis ATP-binding export protein CcmA (215 aa).

Residues 12 to 215 form the ABC transporter domain; that stretch reads LAAHALTYSR…TRLLHLQKAP (204 aa). 44–51 is a binding site for ATP; that stretch reads GPNGIGKT.

It belongs to the ABC transporter superfamily. CcmA exporter (TC 3.A.1.107) family. As to quaternary structure, the complex is composed of two ATP-binding proteins (CcmA) and two transmembrane proteins (CcmB).

The protein localises to the cell inner membrane. The catalysed reaction is heme b(in) + ATP + H2O = heme b(out) + ADP + phosphate + H(+). In terms of biological role, part of the ABC transporter complex CcmAB involved in the biogenesis of c-type cytochromes; once thought to export heme, this seems not to be the case, but its exact role is uncertain. Responsible for energy coupling to the transport system. This Xylella fastidiosa (strain Temecula1 / ATCC 700964) protein is Cytochrome c biogenesis ATP-binding export protein CcmA.